Consider the following 126-residue polypeptide: Glycine cleavage system H protein (126 aa).

One can recognise a Lipoyl-binding domain in the interval 22-104; that stretch reads TVTIGVTDFA…YGEGWMIKIK (83 aa). Position 63 is an N6-lipoyllysine (Lys-63).

Belongs to the GcvH family. In terms of assembly, the glycine cleavage system is composed of four proteins: P, T, L and H. Requires (R)-lipoate as cofactor.

Its function is as follows. The glycine cleavage system catalyzes the degradation of glycine. The H protein shuttles the methylamine group of glycine from the P protein to the T protein. The protein is Glycine cleavage system H protein of Christiangramia forsetii (strain DSM 17595 / CGMCC 1.15422 / KT0803) (Gramella forsetii).